Reading from the N-terminus, the 142-residue chain is Probable transport accessory protein MmpS5 (142 aa).

The chain crosses the membrane as a helical span at residues 7–26 (RAWIPLLILVVVAIAGFTVQ).

The protein belongs to the MmpS family.

The protein resides in the cell membrane. The polypeptide is Probable transport accessory protein MmpS5 (mmpS5) (Mycobacterium bovis (strain ATCC BAA-935 / AF2122/97)).